The chain runs to 304 residues: Pyridoxal 5'-phosphate synthase subunit PdxS (304 aa).

Asp34 is a binding site for D-ribose 5-phosphate. The active-site Schiff-base intermediate with D-ribose 5-phosphate is the Lys91. Position 163 (Gly163) interacts with D-ribose 5-phosphate. Arg175 contacts D-glyceraldehyde 3-phosphate. Residues Gly224 and 245 to 246 (GS) each bind D-ribose 5-phosphate.

This sequence belongs to the PdxS/SNZ family. In the presence of PdxT, forms a dodecamer of heterodimers.

The catalysed reaction is aldehydo-D-ribose 5-phosphate + D-glyceraldehyde 3-phosphate + L-glutamine = pyridoxal 5'-phosphate + L-glutamate + phosphate + 3 H2O + H(+). It participates in cofactor biosynthesis; pyridoxal 5'-phosphate biosynthesis. Functionally, catalyzes the formation of pyridoxal 5'-phosphate from ribose 5-phosphate (RBP), glyceraldehyde 3-phosphate (G3P) and ammonia. The ammonia is provided by the PdxT subunit. Can also use ribulose 5-phosphate and dihydroxyacetone phosphate as substrates, resulting from enzyme-catalyzed isomerization of RBP and G3P, respectively. This chain is Pyridoxal 5'-phosphate synthase subunit PdxS, found in Streptomyces avermitilis (strain ATCC 31267 / DSM 46492 / JCM 5070 / NBRC 14893 / NCIMB 12804 / NRRL 8165 / MA-4680).